The following is a 404-amino-acid chain: Nuclear receptor subfamily 2 group F member 6 (404 aa).

Residues 1–15 are compositionally biased toward gly residues; it reads MAMVTGGWGGPGGDT. The segment at 1 to 49 is disordered; that stretch reads MAMVTGGWGGPGGDTNGVDKAGGYPRAAEDDSASPPGAASDAEPGDEER. The span at 33-42 shows a compositional bias: low complexity; that stretch reads ASPPGAASDA. S34 and S40 each carry phosphoserine. A DNA-binding region (nuclear receptor) is located at residues 53–128; that stretch reads QVDCVVCGDK…VGMRKEAVQR (76 aa). Residues 56-76 form an NR C4-type zinc finger; it reads CVVCGDKSSGKHYGVFTCEGC. Phosphoserine is present on S83. The NR C4-type zinc finger occupies 92–116; it reads CRSNRDCQIDQHHRNQCQYCRLKKC. Positions 165-393 constitute an NR LBD domain; that stretch reads PVSELIAQLL…TLIRDMLLSG (229 aa). The segment at 327–404 is important for dimerization; sequence LQEKAQVALT…TFNWPYGSGQ (78 aa).

The protein belongs to the nuclear hormone receptor family. NR2 subfamily. As to quaternary structure, binds DNA as dimer; homodimer and heterodimer with NR2F2 and probably NR2F1. Interacts with THRB. Expressed in heart, placenta, liver, skeletal muscle, kidney and pancreas.

Its subcellular location is the nucleus. In terms of biological role, transcription factor predominantly involved in transcriptional repression. Binds to promoter/enhancer response elements that contain the imperfect 5'-AGGTCA-3' direct or inverted repeats with various spacings which are also recognized by other nuclear hormone receptors. Involved in modulation of hormonal responses. Represses transcriptional activity of the lutropin-choriogonadotropic hormone receptor/LHCGR gene, the renin/REN gene and the oxytocin-neurophysin/OXT gene. Represses the triiodothyronine-dependent and -independent transcriptional activity of the thyroid hormone receptor gene in a cell type-specific manner. The corepressing function towards thyroid hormone receptor beta/THRB involves at least in part the inhibition of THRB binding to triiodothyronine response elements (TREs) by NR2F6. Inhibits NFATC transcription factor DNA binding and subsequently its transcriptional activity. Acts as transcriptional repressor of IL-17 expression in Th-17 differentiated CD4(+) T cells and may be involved in induction and/or maintenance of peripheral immunological tolerance and autoimmunity. Involved in development of forebrain circadian clock; is required early in the development of the locus coeruleus (LC). The protein is Nuclear receptor subfamily 2 group F member 6 (NR2F6) of Homo sapiens (Human).